The primary structure comprises 380 residues: Outer mitochondrial transmembrane helix translocase (380 aa).

Over 1 to 18 (MLSDIPRDALLRPLTRNE) the chain is Mitochondrial intermembrane. Residues 19–37 (VVGMLVRLTVFGAATYYSI) traverse the membrane as a helical segment. The Cytoplasmic segment spans residues 38-380 (KWVVDALDPT…PANLREVPLD (343 aa)). 136–143 (GPPGCGKT) is an ATP binding site.

The protein belongs to the AAA ATPase family. MSP1 subfamily.

The protein localises to the mitochondrion outer membrane. The protein resides in the peroxisome membrane. It is found in the postsynaptic cell membrane. The enzyme catalyses [protein]-with a C-terminal TM segment(out) + ATP + H2O = [protein]-with a C-terminal TM segment(in) + ADP + phosphate + H(+). Outer mitochondrial translocase required to remove mislocalized tail-anchored transmembrane proteins on mitochondria. Specifically recognizes and binds tail-anchored transmembrane proteins: acts as a dislocase that mediates the ATP-dependent extraction of mistargeted tail-anchored transmembrane proteins from the mitochondrion outer membrane. Also plays a critical role in regulating the surface expression of AMPA receptors (AMPAR), thereby regulating synaptic plasticity and learning and memory. The polypeptide is Outer mitochondrial transmembrane helix translocase (Danio rerio (Zebrafish)).